The following is a 276-amino-acid chain: Sulfur carrier protein FdhD (276 aa).

The active-site Cysteine persulfide intermediate is the C120.

The protein belongs to the FdhD family.

The protein localises to the cytoplasm. Its function is as follows. Required for formate dehydrogenase (FDH) activity. Acts as a sulfur carrier protein that transfers sulfur from IscS to the molybdenum cofactor prior to its insertion into FDH. The polypeptide is Sulfur carrier protein FdhD (Bordetella parapertussis (strain 12822 / ATCC BAA-587 / NCTC 13253)).